Reading from the N-terminus, the 155-residue chain is MKITLIAVGTKMPSWVTTGFEEYQRRFPKDMPFELIEIPAGKRGKNADIKRILEQEGKAMLAACGKGKVVTLDIPGKPWTTPQLAEQLEAWKNDGRDVCLLIGGPEGLSPECKAAAEQSWSLSPLTLPHPLVRVVVAESLYRAWSLTTNHPYHRE.

S-adenosyl-L-methionine contacts are provided by residues Leu-72, Gly-103, and 122–127; that span reads LSPLTL.

Belongs to the RNA methyltransferase RlmH family. As to quaternary structure, homodimer.

Its subcellular location is the cytoplasm. The catalysed reaction is pseudouridine(1915) in 23S rRNA + S-adenosyl-L-methionine = N(3)-methylpseudouridine(1915) in 23S rRNA + S-adenosyl-L-homocysteine + H(+). Specifically methylates the pseudouridine at position 1915 (m3Psi1915) in 23S rRNA. This chain is Ribosomal RNA large subunit methyltransferase H, found in Haemophilus influenzae (strain PittGG).